The chain runs to 478 residues: Probable sodium/glutamine symporter GlnT (478 aa).

The next 10 membrane-spanning stretches (helical) occupy residues 14 to 34 (DLLWSKLLIVLLLSFGIYFTF), 85 to 105 (IAIAIALGGPGAIFWMWIIAI), 145 to 165 (WMGALFAVLITLSFGIVFNSV), 185 to 205 (LGLILIAVFGTIIFGGVKRIA), 211 to 231 (IVVVLAVLYIGVAFFVIFSNI), 236 to 256 (GVLALIVKNAFGFDQAAGGAL), 298 to 318 (AFGVLTDTLVICTSTAFIILF), 342 to 362 (GSWASGFLAILILLFGFCALI), 381 to 401 (LIFVYRIGVLAMIVFGCVAKV), and 411 to 431 (FMGLMVIVNLIAIFLLSKVVF).

The protein belongs to the alanine or glycine:cation symporter (AGCS) (TC 2.A.25) family.

The protein resides in the cell membrane. Probably functions as a sodium/glutamine symporter for glutamine uptake. This chain is Probable sodium/glutamine symporter GlnT (glnT), found in Bacillus subtilis (strain 168).